A 345-amino-acid chain; its full sequence is S-adenosylmethionine:tRNA ribosyltransferase-isomerase (345 aa).

The protein belongs to the QueA family. As to quaternary structure, monomer.

It localises to the cytoplasm. It catalyses the reaction 7-aminomethyl-7-carbaguanosine(34) in tRNA + S-adenosyl-L-methionine = epoxyqueuosine(34) in tRNA + adenine + L-methionine + 2 H(+). The protein operates within tRNA modification; tRNA-queuosine biosynthesis. Its function is as follows. Transfers and isomerizes the ribose moiety from AdoMet to the 7-aminomethyl group of 7-deazaguanine (preQ1-tRNA) to give epoxyqueuosine (oQ-tRNA). In Shewanella sp. (strain MR-4), this protein is S-adenosylmethionine:tRNA ribosyltransferase-isomerase.